We begin with the raw amino-acid sequence, 193 residues long: dCTP deaminase (193 aa).

DCTP is bound by residues 110-115, D128, 136-138, Y171, K178, and Q182; these read RSSLAR and VLE. The Proton donor/acceptor role is filled by E138.

The protein belongs to the dCTP deaminase family. As to quaternary structure, homotrimer.

It catalyses the reaction dCTP + H2O + H(+) = dUTP + NH4(+). It functions in the pathway pyrimidine metabolism; dUMP biosynthesis; dUMP from dCTP (dUTP route): step 1/2. Functionally, catalyzes the deamination of dCTP to dUTP. In Aeromonas salmonicida (strain A449), this protein is dCTP deaminase.